Here is a 305-residue protein sequence, read N- to C-terminus: Guanine nucleotide-binding protein subunit beta (305 aa).

WD repeat units lie at residues 19–49, 61–91, 104–133, 145–176, 188–218, 231–260, and 272–302; these read NKLGKIPDIDISTDGKYLLSASTNDVLLVWD, APSVWIMTCAFSPSTKSIAAGGLNNFCVVYD, GHAGFVSCCKYVDDGHLLTGSGDKTCMFWD, GHEMDIVSLDFLPSNPNLFVTGGCDKLAKLWD, GNTSDINSISFFPSNADFVTGAEDGIARCFD, PSSSPINSVLFSKSGKLLFIAKDKTCEVWD, and GHENRISSLALTSDGTMLATGSWDECVRLWS.

It belongs to the WD repeat G protein beta family. In terms of assembly, g proteins are composed of 3 units, alpha, beta and gamma. Binding of the beta-gamma subunit complex (git5-git11) to the alpha subunit (gpa2) facilitates interaction with GPCR git3.

It is found in the cell membrane. The protein resides in the cytoplasm. Its subcellular location is the nucleus. Functionally, beta subunit of the heterotrimeric guanine nucleotide-binding protein (G protein) involved in glucose-induced cAMP signaling. The beta-gamma subunits (git5-git11) promote binding of the alpha subunit gpa2 to GPCR git3, which senses extracellular glucose, to activate cAMP-PKA signaling and repress sexual development and gluconeogenesis. The polypeptide is Guanine nucleotide-binding protein subunit beta (git5) (Schizosaccharomyces pombe (strain 972 / ATCC 24843) (Fission yeast)).